The chain runs to 635 residues: Early transcription factor 70 kDa subunit (635 aa).

Residues 32 to 185 (RSIIDENKSV…SNIISLMSDE (154 aa)) form the Helicase ATP-binding domain. 45 to 52 (HIMGSGKT) provides a ligand contact to ATP. The DEXH box motif lies at 135–138 (DEAH). The region spanning 326-505 (KFKYFINKIE…TLPFDIKKLL (180 aa)) is the Helicase C-terminal domain.

This sequence belongs to the helicase family. VETF subfamily. As to quaternary structure, heterodimer of a 70 kDa and a 82 kDa subunit. Part of the early transcription complex composed of ETF, RAP94, and the DNA-directed RNA polymerase.

It is found in the virion. Its function is as follows. Acts with RNA polymerase to initiate transcription from early gene promoters. Is recruited by the RPO-associated protein of 94 kDa (RAP94) to form the early transcription complex, which also contains the core RNA polymerase. ETF heterodimer binds to early gene promoters. This Oryctolagus cuniculus (Rabbit) protein is Early transcription factor 70 kDa subunit (VETFS).